Here is a 75-residue protein sequence, read N- to C-terminus: MTEKTIALLENRINDLECQVAFQEQTIEELNDALTQQQLLIAKMQDQMKYVVGKMKNMDSSNMVDPAKEPPPPHY.

This sequence belongs to the SlyX family.

The polypeptide is Protein SlyX homolog (Vibrio vulnificus (strain CMCP6)).